The primary structure comprises 349 residues: Ferredoxin--NADP reductase 1 (349 aa).

FAD contacts are provided by glutamate 36, lysine 44, tyrosine 48, valine 88, leucine 123, aspartate 290, and serine 331.

It belongs to the ferredoxin--NADP reductase type 2 family. In terms of assembly, homodimer. FAD is required as a cofactor.

It carries out the reaction 2 reduced [2Fe-2S]-[ferredoxin] + NADP(+) + H(+) = 2 oxidized [2Fe-2S]-[ferredoxin] + NADPH. This chain is Ferredoxin--NADP reductase 1, found in Bacillus cytotoxicus (strain DSM 22905 / CIP 110041 / 391-98 / NVH 391-98).